Here is a 183-residue protein sequence, read N- to C-terminus: Probable cobalt-precorrin-6B C(15)-methyltransferase (decarboxylating) (183 aa).

Residues Thr19, 43 to 47 (GCGSG), Asp64, and Ala92 contribute to the S-adenosyl-L-methionine site.

Belongs to the methyltransferase superfamily. Archaeal-type CbiT family.

The catalysed reaction is Co-precorrin-6B + S-adenosyl-L-methionine = Co-precorrin-7 + S-adenosyl-L-homocysteine + CO2. It participates in cofactor biosynthesis; adenosylcobalamin biosynthesis; cob(II)yrinate a,c-diamide from sirohydrochlorin (anaerobic route): step 8/10. Its function is as follows. Catalyzes the methylation of C-15 in cobalt-precorrin-6B followed by the decarboxylation of C-12 to form cobalt-precorrin-7. The sequence is that of Probable cobalt-precorrin-6B C(15)-methyltransferase (decarboxylating) from Methanocaldococcus jannaschii (strain ATCC 43067 / DSM 2661 / JAL-1 / JCM 10045 / NBRC 100440) (Methanococcus jannaschii).